A 146-amino-acid polypeptide reads, in one-letter code: Metallothiol transferase FosB (146 aa).

The region spanning 4 to 120 (GINHMTFSVS…DGHLLEVHTG (117 aa)) is the VOC domain. Mg(2+) is bound by residues histidine 7, histidine 66, and glutamate 116. Glutamate 116 functions as the Proton donor/acceptor in the catalytic mechanism.

It belongs to the fosfomycin resistance protein family. FosB subfamily. In terms of assembly, homodimer. The cofactor is Mg(2+).

It is found in the cytoplasm. Its function is as follows. Metallothiol transferase which confers resistance to fosfomycin by catalyzing the addition of a thiol cofactor to fosfomycin. L-cysteine is probably the physiological thiol donor. This is Metallothiol transferase FosB from Shouchella clausii (strain KSM-K16) (Alkalihalobacillus clausii).